The following is a 152-amino-acid chain: UPF0225 protein YchJ (152 aa).

This sequence belongs to the UPF0225 family.

The chain is UPF0225 protein YchJ from Shigella boydii serotype 18 (strain CDC 3083-94 / BS512).